The primary structure comprises 291 residues: ATP synthase gamma chain (291 aa).

The protein belongs to the ATPase gamma chain family. In terms of assembly, F-type ATPases have 2 components, CF(1) - the catalytic core - and CF(0) - the membrane proton channel. CF(1) has five subunits: alpha(3), beta(3), gamma(1), delta(1), epsilon(1). CF(0) has three main subunits: a, b and c.

Its subcellular location is the cell inner membrane. Its function is as follows. Produces ATP from ADP in the presence of a proton gradient across the membrane. The gamma chain is believed to be important in regulating ATPase activity and the flow of protons through the CF(0) complex. The protein is ATP synthase gamma chain of Xanthobacter autotrophicus (strain ATCC BAA-1158 / Py2).